The following is a 479-amino-acid chain: Proline--tRNA ligase (479 aa).

The protein belongs to the class-II aminoacyl-tRNA synthetase family. ProS type 3 subfamily. As to quaternary structure, homodimer.

It localises to the cytoplasm. The enzyme catalyses tRNA(Pro) + L-proline + ATP = L-prolyl-tRNA(Pro) + AMP + diphosphate. Its function is as follows. Catalyzes the attachment of proline to tRNA(Pro) in a two-step reaction: proline is first activated by ATP to form Pro-AMP and then transferred to the acceptor end of tRNA(Pro). The polypeptide is Proline--tRNA ligase (Mesomycoplasma hyopneumoniae (strain 7448) (Mycoplasma hyopneumoniae)).